The following is a 208-amino-acid chain: Uracil phosphoribosyltransferase (208 aa).

5-phospho-alpha-D-ribose 1-diphosphate is bound by residues Arg78, Arg103, and 130–138; that span reads DPMLATGGS. Uracil-binding positions include Ile193 and 198 to 200; that span reads GDA. Residue Asp199 participates in 5-phospho-alpha-D-ribose 1-diphosphate binding.

This sequence belongs to the UPRTase family. Requires Mg(2+) as cofactor.

It catalyses the reaction UMP + diphosphate = 5-phospho-alpha-D-ribose 1-diphosphate + uracil. Its pathway is pyrimidine metabolism; UMP biosynthesis via salvage pathway; UMP from uracil: step 1/1. With respect to regulation, allosterically activated by GTP. Catalyzes the conversion of uracil and 5-phospho-alpha-D-ribose 1-diphosphate (PRPP) to UMP and diphosphate. The protein is Uracil phosphoribosyltransferase of Klebsiella pneumoniae (strain 342).